An 883-amino-acid chain; its full sequence is DNA topoisomerase 1 (883 aa).

One can recognise a Toprim domain in the interval 2 to 126; it reads PKLVIVESPT…TKRMVFHEIT (125 aa). Residues Glu8 and Asp95 each coordinate Mg(2+). A Topo IA-type catalytic domain is found at 141–583; it reads DQRLVHAQET…QFYRGDRGLE (443 aa). Residues 175–180 form an interaction with DNA region; sequence SAGRVQ. A disordered region spans residues 271–294; sequence SLEEKPTTRKPAPPFTTSTLQQES. Residue Tyr320 is the O-(5'-phospho-DNA)-tyrosine intermediate of the active site. The disordered stretch occupies residues 842 to 883; sequence AKAGQAKAKGGRRSTGTPKSGETKARTTKTTKKTTTRRTTSR. Positions 867–883 are enriched in basic residues; that stretch reads RTTKTTKKTTTRRTTSR.

This sequence belongs to the type IA topoisomerase family. As to quaternary structure, monomer. The cofactor is Mg(2+).

It catalyses the reaction ATP-independent breakage of single-stranded DNA, followed by passage and rejoining.. Its function is as follows. Releases the supercoiling and torsional tension of DNA, which is introduced during the DNA replication and transcription, by transiently cleaving and rejoining one strand of the DNA duplex. Introduces a single-strand break via transesterification at a target site in duplex DNA. The scissile phosphodiester is attacked by the catalytic tyrosine of the enzyme, resulting in the formation of a DNA-(5'-phosphotyrosyl)-enzyme intermediate and the expulsion of a 3'-OH DNA strand. The free DNA strand then undergoes passage around the unbroken strand, thus removing DNA supercoils. Finally, in the religation step, the DNA 3'-OH attacks the covalent intermediate to expel the active-site tyrosine and restore the DNA phosphodiester backbone. The chain is DNA topoisomerase 1 from Synechococcus elongatus (strain ATCC 33912 / PCC 7942 / FACHB-805) (Anacystis nidulans R2).